The sequence spans 284 residues: Peflin (284 aa).

Residues 1–111 (MASYPYRQGC…QPGLYGQGGA (111 aa)) form a disordered region. A compositionally biased stretch (low complexity) spans 8–26 (QGCPGAAGQAPGAPPGSYY). Tandem repeats lie at residues 21–29 (PPGSYYPGP), 31–39 (NSGGQYGSG), 41–49 (PPGGGYGGP), 50–58 (APGGPYGPP), 59–67 (AGGGPYGHP), 76–84 (TPGGPYGGA), 85–92 (APGGPYGQ), 93–100 (PPPSSYGA), and 101–109 (QQPGLYGQG). The tract at residues 21-109 (PPGSYYPGPP…AQQPGLYGQG (89 aa)) is 9 X 9 AA approximate tandem repeat of [AP]-P-G-G-P-Y-G-G-P-P. Positions 34–50 (GQYGSGLPPGGGYGGPA) are enriched in gly residues. Residues 65–75 (GHPNPGMFPSG) are compositionally biased toward low complexity. Gly residues predominate over residues 76 to 90 (TPGGPYGGAAPGGPY). EF-hand domains are found at residues 114-149 (NVDP…CNWS), 155-183 (TCLM…WKFI), 181-216 (KFIQ…MGYN), 217-253 (LSPQ…LQVL), and 254-283 (TEAF…ASRM). Ca(2+)-binding residues include Asp127, Asp129, Ser131, and Tyr133. Residue Lys137 forms a Glycyl lysine isopeptide (Lys-Gly) (interchain with G-Cter in ubiquitin) linkage. Glu138 is a binding site for Ca(2+). Residues Asp194, Asp196, Ser198, Ser200, and Glu205 each coordinate Ca(2+). The tract at residues 204 to 284 (TELQQALSQM…FVTMTASRML (81 aa)) is required for interaction with PDCD6.

Heterodimer; heterodimerizes (via the EF-hand 5) with PDCD6. Dissociates from PDCD6 in presence of calcium. Post-translationally, ubiquitinated by the BCR(KLHL12) E3 ubiquitin ligase complex.

The protein localises to the cytoplasm. It localises to the endoplasmic reticulum. It is found in the membrane. The protein resides in the cytoplasmic vesicle. Its subcellular location is the COPII-coated vesicle membrane. Its function is as follows. Calcium-binding protein that acts as an adapter that bridges unrelated proteins or stabilizes weak protein-protein complexes in response to calcium. Together with PDCD6, acts as a calcium-dependent adapter for the BCR(KLHL12) complex, a complex involved in endoplasmic reticulum (ER)-Golgi transport by regulating the size of COPII coats. In response to cytosolic calcium increase, the heterodimer formed with PDCD6 interacts with, and bridges together the BCR(KLHL12) complex and SEC31 (SEC31A or SEC31B), promoting monoubiquitination of SEC31 and subsequent collagen export, which is required for neural crest specification. Its role in the heterodimer formed with PDCD6 is however unclear: some evidence shows that PEF1 and PDCD6 work together and promote association between PDCD6 and SEC31 in presence of calcium. Other reports show that PEF1 dissociates from PDCD6 in presence of calcium, and may act as a negative regulator of PDCD6. Also acts as a negative regulator of ER-Golgi transport; possibly by inhibiting interaction between PDCD6 and SEC31. The protein is Peflin of Homo sapiens (Human).